Reading from the N-terminus, the 183-residue chain is MKNNDSKISKYISLILRHKPEEIGLKLDEHGYLGVLDLIEGLNKSYKGFSMDDLERIVREDSKGRYSFNEDKSKIRANQGHSIKVDLGLEAIKPPKVLYHGTGRKYIESILKNGLIKKERQYVHLSKDIETASIVGKRHGDLVILEVDSESMFKDGIKFYLSKNNVWLCDYVKVEYIKEISLL.

It belongs to the KptA/TPT1 family.

Removes the 2'-phosphate from RNA via an intermediate in which the phosphate is ADP-ribosylated by NAD followed by a presumed transesterification to release the RNA and generate ADP-ribose 1''-2''-cyclic phosphate (APPR&gt;P). May function as an ADP-ribosylase. The protein is Probable RNA 2'-phosphotransferase of Clostridium perfringens (strain 13 / Type A).